The following is a 201-amino-acid chain: GTP cyclohydrolase 1 (201 aa).

Positions 90, 93, and 163 each coordinate Zn(2+).

It belongs to the GTP cyclohydrolase I family. In terms of assembly, homomer.

The enzyme catalyses GTP + H2O = 7,8-dihydroneopterin 3'-triphosphate + formate + H(+). It participates in cofactor biosynthesis; 7,8-dihydroneopterin triphosphate biosynthesis; 7,8-dihydroneopterin triphosphate from GTP: step 1/1. The polypeptide is GTP cyclohydrolase 1 (Streptomyces griseus subsp. griseus (strain JCM 4626 / CBS 651.72 / NBRC 13350 / KCC S-0626 / ISP 5235)).